A 458-amino-acid polypeptide reads, in one-letter code: Brassinosteroid-related acyltransferase 1 (458 aa).

Catalysis depends on His-164, which acts as the Proton acceptor.

Belongs to the plant acyltransferase family. Highly expressed in young tissues and vascular bundles. Mostly expressed in young leaves, primary roots, flowers (including petals and sepals), and siliques.

It is found in the endoplasmic reticulum. The protein resides in the nucleus. It functions in the pathway plant hormone biosynthesis; brassinosteroid biosynthesis. Its function is as follows. Brassinosteroids (BR) acyltransferase with acyl-CoA ligase activity toward brassinolide (BL), castasterone (CS), typhasterol (TY), 6-deoxotyphasterol (6-deoxoTY), and 6-deoxocastasterone (6-deoxoCS) and thus converts them to corresponding lauroyl esters. Regulates BR homeostasis and promotes BR-mediated cell growth regulation. Involved in vascular bundle development. This chain is Brassinosteroid-related acyltransferase 1, found in Arabidopsis thaliana (Mouse-ear cress).